A 1691-amino-acid polypeptide reads, in one-letter code: Collagen alpha-6(IV) chain (1691 aa).

Positions 1–22 are cleaved as a signal peptide; the sequence is MLINKLWLLLVTLCLTEELAAA. The interval 23-46 is 7S domain; that stretch reads GEKSYGKPCGGQDCSGSCQCFPEK. The tract at residues 47–1463 is triple-helical region; sequence GARGRPGPIG…FGMPGMPGQS (1417 aa). 5 disordered regions span residues 108–338, 404–473, 486–881, 915–1099, and 1185–1459; these read IPGH…EGQK, GFPG…LGLK, GGVP…KGSP, GIPG…KGRD, and THGT…MPGM. Asn-127 carries N-linked (GlcNAc...) asparagine glycosylation. Positions 185–197 are enriched in low complexity; sequence PQGAPGFPGAVGP. Residues 198–213 are compositionally biased toward pro residues; the sequence is AGPPGLQGPPGPPGPL. Composition is skewed to low complexity over residues 311-320 and 421-431; these read QGPPGQQGKK and GAAGLPGRDGL. 2 stretches are compositionally biased toward pro residues: residues 432-443 and 491-502; these read PGPPGPPGPPSP and TGPPGEPGPPGP. Positions 503–512 are enriched in low complexity; that stretch reads WGLIGLPGLK. Positions 515-517 match the Cell attachment site motif; the sequence is RGD. Positions 526-541 are enriched in low complexity; it reads PAGAPGLVGPLGPSGP. The Cell attachment site motif lies at 560–562; it reads RGD. Residues 588-599 show a composition bias toward gly residues; that stretch reads GLPGDGGQGFPG. 4 stretches are compositionally biased toward low complexity: residues 641 to 652, 660 to 703, 722 to 735, and 802 to 820; these read LPGQQGLPGSKG, PGSY…GSPG, LPGFPGLPGKDGLP, and SPGTPGQVGQPGTPGSSGP. A compositionally biased stretch (basic residues) spans 842–851; the sequence is PGKKGTRGKK. Low complexity predominate over residues 853-878; sequence PPGSIVKKGLPGLKGLPGNPGLVGLK. The Cell attachment site motif lies at 986–988; the sequence is RGD. Over residues 1055-1068 the composition is skewed to low complexity; sequence SPGLPGASGLPGLK. The segment covering 1210–1220 has biased composition (gly residues); that stretch reads GYPGIGIGAPG. Residues 1234–1253 are compositionally biased toward low complexity; that stretch reads PGLQGPAGLPGAPGISLPSL. Over residues 1275 to 1284 the composition is skewed to pro residues; sequence PAGPPGPPGP. Over residues 1360 to 1371 the composition is skewed to polar residues; that stretch reads SGLQGDPGQTPT. Composition is skewed to low complexity over residues 1384–1397 and 1429–1459; these read LPGIDGIPGLTGDP and ALGDPGLPGLQGPPGFEGAPGQQGPFGMPGM. Positions 1467–1691 constitute a Collagen IV NC1 domain; that stretch reads GYTLVKHSQS…SRCQVCMKSL (225 aa). 6 cysteine pairs are disulfide-bonded: Cys-1482–Cys-1571, Cys-1515–Cys-1568, Cys-1527–Cys-1533, Cys-1590–Cys-1687, Cys-1624–Cys-1684, and Cys-1636–Cys-1643.

It belongs to the type IV collagen family. In terms of assembly, there are six type IV collagen isoforms, alpha 1(IV)-alpha 6(IV), each of which can form a triple helix structure with 2 other chains to generate type IV collagen network. In terms of processing, prolines at the third position of the tripeptide repeating unit (G-X-Y) are hydroxylated in some or all of the chains. Type IV collagens contain numerous cysteine residues which are involved in inter- and intramolecular disulfide bonding. 12 of these, located in the NC1 domain, are conserved in all known type IV collagens. Post-translationally, the trimeric structure of the NC1 domains is stabilized by covalent bonds between Lys and Met residues.

It localises to the secreted. The protein resides in the extracellular space. The protein localises to the extracellular matrix. It is found in the basement membrane. Type IV collagen is the major structural component of glomerular basement membranes (GBM), forming a 'chicken-wire' meshwork together with laminins, proteoglycans and entactin/nidogen. This Homo sapiens (Human) protein is Collagen alpha-6(IV) chain (COL4A6).